Reading from the N-terminus, the 309-residue chain is Taste receptor type 2 member 124 (309 aa).

Topologically, residues 1–7 (MVSVLHS) are extracellular. Residues 8-28 (ISTIIIIAEFVWGNLSNGLIV) traverse the membrane as a helical segment. Residues 29–46 (LKNCLDWINIKELSTLDQ) lie on the Cytoplasmic side of the membrane. A helical membrane pass occupies residues 47–67 (ILILLAISRISLIWETLLMWV). The Extracellular segment spans residues 68–81 (KDKLISSITIEELK). The helical transmembrane segment at 82–102 (MIMFSFMLSSHFSLWLATALS) threads the bilayer. Topologically, residues 103–127 (TFYLFRIANCSWQIFLYLKWRLKHL) are cytoplasmic. The chain crosses the membrane as a helical span at residues 128-148 (IVQMLLGSVMFLIANIIQITI). The Extracellular portion of the chain corresponds to 149–182 (TLEKRFYQYKGNTSVNSIQNEFALLIEMMLFNMT). 2 N-linked (GlcNAc...) asparagine glycosylation sites follow: asparagine 160 and asparagine 180. The chain crosses the membrane as a helical span at residues 183–203 (IFSVIPFLLALISFFLLIFSL). Topologically, residues 204-227 (WKHLQRMQLNSREDRDPSTKAHRN) are cytoplasmic. Residues 228–248 (ALGIMVSFLLLYTMYVLSLLI) traverse the membrane as a helical segment. At 249-261 (SWIAQKNQSELVH) the chain is on the extracellular side. Asparagine 255 carries N-linked (GlcNAc...) asparagine glycosylation. A helical transmembrane segment spans residues 262 to 282 (IICMITSLLNPSVHSSILILG). Over 283–309 (NFKLKQSSLCILRHLGCRLKSQNTPTT) the chain is Cytoplasmic.

The protein belongs to the G-protein coupled receptor T2R family.

The protein localises to the membrane. Functionally, putative taste receptor which may play a role in the perception of bitterness. In Rattus norvegicus (Rat), this protein is Taste receptor type 2 member 124.